We begin with the raw amino-acid sequence, 550 residues long: Aspartate--tRNA ligase (550 aa).

Glutamate 162 is a binding site for L-aspartate. Residues 186–189 (QIYK) are aspartate. Residue arginine 208 coordinates L-aspartate. ATP is bound by residues 208-210 (RDE) and glutamine 217. Histidine 417 lines the L-aspartate pocket. Glutamate 451 is an ATP binding site. Arginine 458 lines the L-aspartate pocket. Position 499-502 (499-502 (GIDR)) interacts with ATP.

This sequence belongs to the class-II aminoacyl-tRNA synthetase family. Type 1 subfamily. Homodimer.

Its subcellular location is the cytoplasm. The enzyme catalyses tRNA(Asp) + L-aspartate + ATP = L-aspartyl-tRNA(Asp) + AMP + diphosphate. Its function is as follows. Catalyzes the attachment of L-aspartate to tRNA(Asp) in a two-step reaction: L-aspartate is first activated by ATP to form Asp-AMP and then transferred to the acceptor end of tRNA(Asp). The protein is Aspartate--tRNA ligase of Mycoplasma genitalium (strain ATCC 33530 / DSM 19775 / NCTC 10195 / G37) (Mycoplasmoides genitalium).